Reading from the N-terminus, the 279-residue chain is Large ribosomal subunit protein uL2 (279 aa).

Disordered regions lie at residues 34–58 (LRPL…GGGH) and 225–279 (VMNP…KNKR). A compositionally biased stretch (basic and acidic residues) spans 251-268 (GKPEGRTRRPNKESDKLI). A compositionally biased stretch (basic residues) spans 269–279 (VRRRRTGKNKR).

This sequence belongs to the universal ribosomal protein uL2 family. In terms of assembly, part of the 50S ribosomal subunit. Forms a bridge to the 30S subunit in the 70S ribosome.

Its function is as follows. One of the primary rRNA binding proteins. Required for association of the 30S and 50S subunits to form the 70S ribosome, for tRNA binding and peptide bond formation. It has been suggested to have peptidyltransferase activity; this is somewhat controversial. Makes several contacts with the 16S rRNA in the 70S ribosome. The chain is Large ribosomal subunit protein uL2 from Micrococcus luteus (strain ATCC 4698 / DSM 20030 / JCM 1464 / CCM 169 / CCUG 5858 / IAM 1056 / NBRC 3333 / NCIMB 9278 / NCTC 2665 / VKM Ac-2230) (Micrococcus lysodeikticus).